We begin with the raw amino-acid sequence, 268 residues long: MERYQQLFDRLASNKEGAFVPFVTLGDPNPALSLQIIDTLVEAGADALELGIPFSDPLADGPTIQSAALRAFASGVTPTQCFEMLAAIRQKHPSMPIGLLMYANLVFHKGIDAFYQRCAEVGVDSVLIADVPYEESAPFRAAAIRHGIAPIFICPPNADDDLLREISSHGRGYTYLLSRAGVTGTESRAQLPLHHLVNKLREYHAAPPLQGFGISEPAQVRDALQAGAAGAISGSAIVKIIEQNHTQPAEMLTRLATFVSEMKAATRA.

Active-site proton acceptor residues include glutamate 49 and aspartate 60.

This sequence belongs to the TrpA family. In terms of assembly, tetramer of two alpha and two beta chains.

The catalysed reaction is (1S,2R)-1-C-(indol-3-yl)glycerol 3-phosphate + L-serine = D-glyceraldehyde 3-phosphate + L-tryptophan + H2O. Its pathway is amino-acid biosynthesis; L-tryptophan biosynthesis; L-tryptophan from chorismate: step 5/5. Its function is as follows. The alpha subunit is responsible for the aldol cleavage of indoleglycerol phosphate to indole and glyceraldehyde 3-phosphate. In Serratia proteamaculans (strain 568), this protein is Tryptophan synthase alpha chain.